A 386-amino-acid chain; its full sequence is 2-isopropylmalate synthase (386 aa).

Positions 15 to 269 constitute a Pyruvate carboxyltransferase domain; sequence IRIFDTTLRD…ETNVKTWKLY (255 aa). Positions 24, 207, 209, and 243 each coordinate a divalent metal cation.

This sequence belongs to the alpha-IPM synthase/homocitrate synthase family. Homodimer. A divalent metal cation serves as cofactor.

It carries out the reaction 3-methyl-2-oxobutanoate + acetyl-CoA + H2O = (2S)-2-isopropylmalate + CoA + H(+). It functions in the pathway amino-acid biosynthesis; L-leucine biosynthesis; L-leucine from 3-methyl-2-oxobutanoate: step 1/4. Catalyzes the condensation of the acetyl group of acetyl-CoA with 3-methyl-2-oxobutanoate (2-oxoisovalerate) to form 3-carboxy-3-hydroxy-4-methylpentanoate (2-isopropylmalate). Carries out the first step of the leucine biosynthesis pathway. The chain is 2-isopropylmalate synthase (leuA) from Saccharolobus solfataricus (strain ATCC 35092 / DSM 1617 / JCM 11322 / P2) (Sulfolobus solfataricus).